The following is a 689-amino-acid chain: Glycine--tRNA ligase beta subunit (689 aa).

This sequence belongs to the class-II aminoacyl-tRNA synthetase family. In terms of assembly, tetramer of two alpha and two beta subunits.

The protein localises to the cytoplasm. It catalyses the reaction tRNA(Gly) + glycine + ATP = glycyl-tRNA(Gly) + AMP + diphosphate. This chain is Glycine--tRNA ligase beta subunit, found in Photobacterium profundum (strain SS9).